The sequence spans 896 residues: MTQSLGIEQYKLSVVSGGKPALNNLSSVTGNKNIARLSQDQRNYIIPFNNQIKVYSVETRQCVKTLKFANNSLLSGIFLQEEENNESIVKILLGDITVPQQEDAHLITVFTNNGHVIVLNYKGKLVESPKHFKISLADEKLANVFHSEGNYRILTTFKDPSQKAHNSLQSYRLYALTFDDAKKQFEVAHQAEWHNVILSNISSNGKLLAHMCKDVSTKDHEHKSISVVSLFDDSVNLSFPLGSILSSQTQSLSYNTRYVSSMAIDNMGQQLAVGFASGVISIVSLADLQIRLLKWHIDSVLSLSFSHDGSYLLSGGWEKVMSLWQLETNSQQFLPRLNGIIIDCQVLGPQGNYYSLILQMTENNSNSDYQFLLLNASDLTSKLSINGPLPVFNSTIKHIQQPISAMNTKNSNSITSLNHSKKKQSRKLIKSRRQDFTTNVEINPINKNLYFPHISAVQIFDFYKNEQVNYQYLTSGVNNSMGKVRFELNLQDPIITDLKFTKDGQWMITYEIEYPPNDLLSSKDLTHILKFWTKNDNETNWNLKTKVINPHGISVPITKILPSPRSVNNSQGCLTADNNGGLKFWSFDSHESNWCLKKISLPNFNHFSNSVSLAWSQDGSLIFHGFDDKLQILDFDTFKKFESLENTKTVSEFTLDSEIQTVKLINDTNLIVATRTTLNAINLLRGQVINSFDLYPFVNGVYKNGHMDRLITCDERTGNIALVINQQLTDLDGVPTINYKSRIIIFDSDLSTKLGNFTHHEYISWIGWNYDTDFIFLDIESTLGVVGTTVNTQLSDEVNNEGILDGLVSNTITTSASNSDIFAEQLHKLSSRGKKSDTRDKNTNDNDEDEEDIALEFINGEKKDKLVNMNSFTSMFDNIQNVQMDTFFDRVMKVLT.

WD repeat units lie at residues 295-334, 490-542, 552-595, and 605-645; these read WHID…QQFL, LQDP…TNWN, GISV…SNWC, and NHFS…ESLE.

In terms of assembly, interacts with snoRNA U3. Interacts with MPP10. Component of the ribosomal small subunit (SSU) processome composed of at least 40 protein subunits and snoRNA U3. In the absence of snoRNA3, forms a complex with other t-UTPs. This complex can associate with pre-18S ribosomal RNAs.

It is found in the nucleus. It localises to the nucleolus. In terms of biological role, involved in nucleolar processing of pre-18S ribosomal RNA. Required for optimal pre-ribosomal RNA transcription by RNA polymerase I together with a subset of U3 proteins required for transcription (t-UTPs). This Saccharomyces cerevisiae (strain ATCC 204508 / S288c) (Baker's yeast) protein is NET1-associated nuclear protein 1 (NAN1).